The sequence spans 235 residues: Mediator of RNA polymerase II transcription subunit 29 (235 aa).

Residues 1–14 are compositionally biased toward low complexity; sequence MMNQMGMMMQQQGV. The segment at 1–54 is disordered; the sequence is MMNQMGMMMQQQGVGVPGGPGGVGGVGMPGPGGVGVAPGMMQSPQMQQAQQQQV. The segment covering 15–36 has biased composition (gly residues); it reads GVPGGPGGVGGVGMPGPGGVGV. Over residues 37-54 the composition is skewed to low complexity; that stretch reads APGMMQSPQMQQAQQQQV.

The protein belongs to the Mediator complex subunit 29 family. In terms of assembly, component of the Mediator complex.

Its subcellular location is the nucleus. Component of the Mediator complex, a coactivator involved in the regulated transcription of nearly all RNA polymerase II-dependent genes. Mediator functions as a bridge to convey information from gene-specific regulatory proteins to the basal RNA polymerase II transcription machinery. Mediator is recruited to promoters by direct interactions with regulatory proteins and serves as a scaffold for the assembly of a functional preinitiation complex with RNA polymerase II and the general transcription factors. The polypeptide is Mediator of RNA polymerase II transcription subunit 29 (ix) (Anopheles gambiae (African malaria mosquito)).